The chain runs to 711 residues: Polyribonucleotide nucleotidyltransferase (711 aa).

Residues Asp-486 and Asp-492 each contribute to the Mg(2+) site. The 60-residue stretch at 553-612 (PRIHTIKINPDKIKDVIGKGGSVIRALTEETGTTIEIEDDGTVKIAATDGEKAKHAIRRI) folds into the KH domain. The 69-residue stretch at 622 to 690 (GRIYNGKVTR…RQGRVRLSIK (69 aa)) folds into the S1 motif domain. Residues 690–711 (KEATEQSQPAAAPEAPAAEQGE) are disordered. The span at 694–711 (EQSQPAAAPEAPAAEQGE) shows a compositional bias: low complexity.

It belongs to the polyribonucleotide nucleotidyltransferase family. In terms of assembly, component of the RNA degradosome, which is a multiprotein complex involved in RNA processing and mRNA degradation. Mg(2+) is required as a cofactor.

Its subcellular location is the cytoplasm. It catalyses the reaction RNA(n+1) + phosphate = RNA(n) + a ribonucleoside 5'-diphosphate. In terms of biological role, involved in mRNA degradation. Catalyzes the phosphorolysis of single-stranded polyribonucleotides processively in the 3'- to 5'-direction. This Citrobacter koseri (strain ATCC BAA-895 / CDC 4225-83 / SGSC4696) protein is Polyribonucleotide nucleotidyltransferase.